Reading from the N-terminus, the 432-residue chain is MAAAVRAAGCLPALCSLQAGHFLSRQLSLNAFPVAATSFLAVKTALSHGSLSSRETRRNHCLTSLSHVLQTQCCVSSPGNWTGQQCRPYSFFTKLTAEELWKGALAETGAGARKGRGKRTKKKKRKDLNRGQIIGEGRSGFLWPGLNVPLIKSGVVQNIGQRSKEEQQKVEATMVEQREEWDRKRKIKVKRERGWSGNTWGGVSIGPPDPGPNGETYEDFDTRILEVRNVFNMTAKEGRKKSVRVLVAVGNGNGAAGFAIGKAADRGDAFRKAKNRAIHYLHYIERYEGHTIFHDISLRFKRTQIRMKKQPRGYGLRCHRAIITICRLIGIKDMYARVTGSMNMLNLTRGLFHGLARQETHQHLADKKGLHVVEFREECGPLPIVVASPHGALSKEPEPEPEVPDTKLDWQDVKAMQGLKRSVWFNLKRPAT.

Residues 110–130 (AGARKGRGKRTKKKKRKDLNR) are disordered. A compositionally biased stretch (basic residues) spans 113–127 (RKGRGKRTKKKKRKD). The 65-residue stretch at 220–284 (FDTRILEVRN…NRAIHYLHYI (65 aa)) folds into the S5 DRBM domain.

Belongs to the universal ribosomal protein uS5 family. Component of the mitochondrial ribosome small subunit (28S) which comprises a 12S rRNA and about 30 distinct proteins.

The protein localises to the mitochondrion. This is Small ribosomal subunit protein uS5m (Mrps5) from Mus musculus (Mouse).